Consider the following 203-residue polypeptide: Probable GTP-binding protein EngB (203 aa).

The EngB-type G domain occupies 1–190; it reads MPEIVLVGRS…LEALQERVRK (190 aa). GTP contacts are provided by residues 8–15, 35–39, 53–56, 132–135, and 169–171; these read GRSNVGKS, GVTRK, DMPG, NKID, and ISA. Mg(2+) is bound by residues Ser15 and Thr37.

The protein belongs to the TRAFAC class TrmE-Era-EngA-EngB-Septin-like GTPase superfamily. EngB GTPase family. The cofactor is Mg(2+).

Functionally, necessary for normal cell division and for the maintenance of normal septation. In Methanopyrus kandleri (strain AV19 / DSM 6324 / JCM 9639 / NBRC 100938), this protein is Probable GTP-binding protein EngB.